Here is an 83-residue protein sequence, read N- to C-terminus: MKSDIHPEYGYVVFKDLASSEMFLTRSVLKPEKQIEWNDGNHYPLFEVEISSASHPFYTGQQRILDSEGRVEKFYARYKKQSQ.

This sequence belongs to the bacterial ribosomal protein bL31 family. Type B subfamily. Part of the 50S ribosomal subunit.

The polypeptide is Large ribosomal subunit protein bL31B (Tropheryma whipplei (strain TW08/27) (Whipple's bacillus)).